A 187-amino-acid chain; its full sequence is ATP synthase subunit b, chloroplastic (187 aa).

Residues 34 to 56 traverse the membrane as a helical segment; the sequence is IINLSVVLGLVFTLGRNFLISLL.

It belongs to the ATPase B chain family. F-type ATPases have 2 components, F(1) - the catalytic core - and F(0) - the membrane proton channel. F(1) has five subunits: alpha(3), beta(3), gamma(1), delta(1), epsilon(1). F(0) has four main subunits: a(1), b(1), b'(1) and c(10-14). The alpha and beta chains form an alternating ring which encloses part of the gamma chain. F(1) is attached to F(0) by a central stalk formed by the gamma and epsilon chains, while a peripheral stalk is formed by the delta, b and b' chains.

It localises to the plastid. The protein localises to the chloroplast thylakoid membrane. F(1)F(0) ATP synthase produces ATP from ADP in the presence of a proton or sodium gradient. F-type ATPases consist of two structural domains, F(1) containing the extramembraneous catalytic core and F(0) containing the membrane proton channel, linked together by a central stalk and a peripheral stalk. During catalysis, ATP synthesis in the catalytic domain of F(1) is coupled via a rotary mechanism of the central stalk subunits to proton translocation. Functionally, component of the F(0) channel, it forms part of the peripheral stalk, linking F(1) to F(0). This is ATP synthase subunit b, chloroplastic from Pleurastrum terricola (Filamentous green alga).